The primary structure comprises 128 residues: Prefoldin subunit 1 (128 aa).

Coiled coils occupy residues 17-37 (MIELTGKLKQVQNQMRNKEGD) and 81-115 (LKDSEAAVASLQTSKEYLEKQVAEVENNLRELLQQ).

Belongs to the prefoldin subunit beta family. In terms of assembly, heterohexamer of two PFD-alpha type and four PFD-beta type subunits forming prefoldin co-chaperone complex. Interacts with LSM8, a specific subunit of the LSM2-8 complex, which is a core component of the spliceosome.

The protein localises to the cytoplasm. The protein resides in the nucleus. Binds specifically to cytosolic chaperonin (c-CPN) and transfers target proteins to it. Binds to nascent polypeptide chain and promotes folding in an environment in which there are many competing pathways for nonnative proteins. Together with other chaperonins, contribute to the regulation of gene expression by modulating the spliceosome function on pre-mRNA splicing post-transcriptionally by acting as a co-chaperone of Hsp90 to control levels of LSM8. Required for microtubules (MTs) organization and dynamicity. Involved in the process leading to microtubules dissociation in response to gibberellic acid (GA) probably due to the DELLA proteins-mediated translocation of the prefoldin co-chaperone complex from the cytoplasm to the nucleus. The chain is Prefoldin subunit 1 from Arabidopsis thaliana (Mouse-ear cress).